Here is a 531-residue protein sequence, read N- to C-terminus: Peptide chain release factor 3 (531 aa).

Residues 13-282 enclose the tr-type G domain; the sequence is AKRRTFAIIS…TLIKYSPPPK (270 aa). GTP is bound by residues 22-29, 90-94, and 144-147; these read SHPDAGKT, DTPGH, and NKLD.

It belongs to the TRAFAC class translation factor GTPase superfamily. Classic translation factor GTPase family. PrfC subfamily.

The protein resides in the cytoplasm. Its function is as follows. Increases the formation of ribosomal termination complexes and stimulates activities of RF-1 and RF-2. It binds guanine nucleotides and has strong preference for UGA stop codons. It may interact directly with the ribosome. The stimulation of RF-1 and RF-2 is significantly reduced by GTP and GDP, but not by GMP. This Psychrobacter arcticus (strain DSM 17307 / VKM B-2377 / 273-4) protein is Peptide chain release factor 3.